The following is a 403-amino-acid chain: FAD-dependent monooxygenase tazP (403 aa).

Glycine 75, arginine 144, aspartate 354, and alanine 367 together coordinate FAD.

This sequence belongs to the paxM FAD-dependent monooxygenase family. The cofactor is FAD.

The protein operates within secondary metabolite biosynthesis. Its function is as follows. FAD-dependent monooxygenase; part of the gene cluster that mediates the biosynthesis of azaterrilone A and other azaphilones, a class of fungal metabolites characterized by a highly oxygenated pyrano-quinone bicyclic core and exhibiting a broad range of bioactivities. The first step of the pathway begins with the non-reducing polyketide synthase tazA that assembles one acetyl-CoA starter unit, five malonyl-CoA units, and catalyzes a series of Claisen condensations, methylation, PT-mediated cyclization, and finally releases the first hexaketide precursor through the R-domain. The tazA product then undergoes reduction on its terminal ketone and the following pyran-ring formation by yet undetermined enzyme(s). Dehydration and enoyl reduction, possibly involving the trans-enoyl reductase tazE leads to the next intermediate. TazD is predicted as an acetyltransferase and might catalyze the acetylation steps leading to the synthesis of azaterrilone A. Azaterrilone A is not the final product of the taz pathway and both the highly reducing polyketide synthase tazB and the dual enzyme tazHJ catalyze late steps of the pathway, leading to the production of the 2 final stereoisomers that contain additional polyketide modification whose structures have still to be determined. The sequence is that of FAD-dependent monooxygenase tazP from Aspergillus terreus (strain NIH 2624 / FGSC A1156).